Consider the following 109-residue polypeptide: Cell division protein ZapA (109 aa).

Positions 21–99 (PEQLDALNQA…IEQALLEQGR (79 aa)) form a coiled coil.

It belongs to the ZapA family. Type 1 subfamily. In terms of assembly, homodimer. Interacts with FtsZ.

It localises to the cytoplasm. In terms of biological role, activator of cell division through the inhibition of FtsZ GTPase activity, therefore promoting FtsZ assembly into bundles of protofilaments necessary for the formation of the division Z ring. It is recruited early at mid-cell but it is not essential for cell division. The protein is Cell division protein ZapA of Edwardsiella ictaluri (strain 93-146).